Reading from the N-terminus, the 149-residue chain is Arginine regulator (149 aa).

This sequence belongs to the ArgR family.

The protein resides in the cytoplasm. It participates in amino-acid degradation; L-arginine degradation via ADI pathway. Functionally, regulates the transcription of the arc operon, involved in arginine catabolism. In Bacillus thuringiensis subsp. konkukian (strain 97-27), this protein is Arginine regulator (argR1).